The sequence spans 718 residues: Zinc finger protein 39 (718 aa).

The KRAB domain maps to 59–130 (VSFEDVSVDF…EDVPKQSRAD (72 aa)). Residues 298–320 (FECSICKKTFCTKCELMKHKKIH) form a C2H2-type 1 zinc finger. Residues 353–375 (HRCKQCEKCFHQKNQQNVHERVP) form a C2H2-type 2; degenerate zinc finger. 11 C2H2-type zinc fingers span residues 409–431 (YGCN…QKIH), 437–459 (YGCE…QRTH), 465–487 (YECK…HRTH), 493–515 (YECD…QKVH), 521–543 (YECE…QKTH), 549–571 (YECN…QGTH), 577–599 (YQCE…QRNH), 605–627 (YACE…QRSH), 633–655 (YSCE…QRTH), 661–683 (YECK…QVTH), and 689–711 (FECQ…QRIH).

As to expression, predominantly in the spermatocytes and spermatids of testes.

It is found in the nucleus. Its function is as follows. A putative DNA-binding regulatory protein associated with meiosis in spermatogenesis. This is Zinc finger protein 39 (Zfp39) from Mus musculus (Mouse).